A 308-amino-acid polypeptide reads, in one-letter code: MKTYIRERRLGEGTYAVIYLGYRALPQDKPLVSSGTRIEDVPVAIKKIKPTKYTQGHEISAIREIKSLKRIDSKYVVRLIDTFVYDKCVHIVLEYVETNLENVIRNSDKIIMPGDIKAWILMVLRGVYECHRLFIIHRDIKPNNILITSEGMVKLADFGLTRGIGNRMTPQAVTRWYRAPELLMGSRDYGSPVDMWSVGCVFAELFLRVPLFAGDTDIQQLDMIFRALGTPVEREWPGVSTLPEFLDFQQYPKASLNGLFSAASSDALDLLEKLLTLNPCNRISCDDAIKHPYFKSSPPPTPIGKLPV.

The 291-residue stretch at 4–294 (YIRERRLGEG…CDDAIKHPYF (291 aa)) folds into the Protein kinase domain. Residues 10-18 (LGEGTYAVI) and K46 contribute to the ATP site. Residue D139 is the Proton acceptor of the active site.

The protein belongs to the protein kinase superfamily. CMGC Ser/Thr protein kinase family. CDC2/CDKX subfamily. In terms of assembly, component of the TFIIH holo complex.

It is found in the nucleus. It carries out the reaction [DNA-directed RNA polymerase] + ATP = phospho-[DNA-directed RNA polymerase] + ADP + H(+). Its function is as follows. Protein kinase component of transcription factor IIH (TFIIH) which phosphorylates the C-terminal domain of RNA polymerase II during transition from transcription to elongation after preinitiation complex (PIC) formation, thereby positively regulating transcription. Essential for both basal and activated transcription, and is involved in nucleotide excision repair (NER) of damaged DNA. The chain is Probable serine/threonine-protein kinase KIN28 homolog (KIN28) from Encephalitozoon cuniculi (strain GB-M1) (Microsporidian parasite).